Here is a 572-residue protein sequence, read N- to C-terminus: Urease subunit alpha (572 aa).

The Urease domain maps to Gly136–Phe572. Ni(2+) contacts are provided by His141, His143, and Lys224. At Lys224 the chain carries N6-carboxylysine. Substrate is bound at residue His226. Ni(2+)-binding residues include His253 and His279. His327 functions as the Proton donor in the catalytic mechanism. Residue Asp367 participates in Ni(2+) binding.

It belongs to the metallo-dependent hydrolases superfamily. Urease alpha subunit family. In terms of assembly, heterotrimer of UreA (gamma), UreB (beta) and UreC (alpha) subunits. Three heterotrimers associate to form the active enzyme. Ni cation is required as a cofactor. Post-translationally, carboxylation allows a single lysine to coordinate two nickel ions.

Its subcellular location is the cytoplasm. It carries out the reaction urea + 2 H2O + H(+) = hydrogencarbonate + 2 NH4(+). Its pathway is nitrogen metabolism; urea degradation; CO(2) and NH(3) from urea (urease route): step 1/1. The chain is Urease subunit alpha from Actinobacillus pleuropneumoniae serotype 7 (strain AP76).